The following is a 262-amino-acid chain: Tryptophan synthase alpha chain (262 aa).

Active-site proton acceptor residues include Glu51 and Asp62.

It belongs to the TrpA family. Tetramer of two alpha and two beta chains.

It carries out the reaction (1S,2R)-1-C-(indol-3-yl)glycerol 3-phosphate + L-serine = D-glyceraldehyde 3-phosphate + L-tryptophan + H2O. It participates in amino-acid biosynthesis; L-tryptophan biosynthesis; L-tryptophan from chorismate: step 5/5. Its function is as follows. The alpha subunit is responsible for the aldol cleavage of indoleglycerol phosphate to indole and glyceraldehyde 3-phosphate. The chain is Tryptophan synthase alpha chain from Oceanobacillus iheyensis (strain DSM 14371 / CIP 107618 / JCM 11309 / KCTC 3954 / HTE831).